A 246-amino-acid polypeptide reads, in one-letter code: Envelope glycoprotein L (246 aa).

A signal peptide spans 1–19 (MKTNIFFIFLISILNQIYA). The gL betaherpesvirus-type domain occupies 29–235 (LEQECIKNIL…EKYNEVLPFR (207 aa)). A disulfide bond links C134 and C139.

This sequence belongs to the herpesviridae glycoprotein L (gL) family. Betaherpesvirinae gL subfamily. As to quaternary structure, interacts with glycoprotein H (gH); this interaction is necessary for the correct processing and cell surface expression of gH.

The protein resides in the virion membrane. It is found in the host cell membrane. It localises to the host Golgi apparatus. Its subcellular location is the host trans-Golgi network. In terms of biological role, the heterodimer glycoprotein H-glycoprotein L is required for the fusion of viral and plasma membranes leading to virus entry into the host cell. Acts as a functional inhibitor of gH and maintains gH in an inhibited form. Upon binding to host integrins, gL dissociates from gH leading to activation of the viral fusion glycoproteins gB and gH. This chain is Envelope glycoprotein L, found in Homo sapiens (Human).